Reading from the N-terminus, the 312-residue chain is Coiled-coil domain-containing protein 160 homolog (312 aa).

The stretch at 126-281 (SEGAKFKNQL…EERKREKTHS (156 aa)) forms a coiled coil.

It belongs to the CCDC160 family.

The chain is Coiled-coil domain-containing protein 160 homolog from Xenopus tropicalis (Western clawed frog).